The sequence spans 96 residues: UPF0235 protein PC1_3453 (96 aa).

The protein belongs to the UPF0235 family.

This is UPF0235 protein PC1_3453 from Pectobacterium carotovorum subsp. carotovorum (strain PC1).